Consider the following 193-residue polypeptide: Probable chemoreceptor glutamine deamidase CheD 1 (193 aa).

A disordered region spans residues 1 to 26 (MPHTPPAYPAASADHRPPSSPPAEPA).

It belongs to the CheD family.

The catalysed reaction is L-glutaminyl-[protein] + H2O = L-glutamyl-[protein] + NH4(+). In terms of biological role, probably deamidates glutamine residues to glutamate on methyl-accepting chemotaxis receptors (MCPs), playing an important role in chemotaxis. The chain is Probable chemoreceptor glutamine deamidase CheD 1 from Chromobacterium violaceum (strain ATCC 12472 / DSM 30191 / JCM 1249 / CCUG 213 / NBRC 12614 / NCIMB 9131 / NCTC 9757 / MK).